The primary structure comprises 941 residues: Heat shock protein 70 homolog (941 aa).

The tract at residues 851 to 887 is disordered; sequence ENQPDIPEDSEDSESEDDTTTSKDSESSEITENLALP. Positions 856–869 are enriched in acidic residues; sequence IPEDSEDSESEDDT.

The protein belongs to the heat shock protein 70 family.

In terms of biological role, probable chaperone. This Acanthamoeba polyphaga (Amoeba) protein is Heat shock protein 70 homolog.